The primary structure comprises 82 residues: Small ribosomal subunit protein bS16 (82 aa).

This sequence belongs to the bacterial ribosomal protein bS16 family.

The protein is Small ribosomal subunit protein bS16 of Pectobacterium atrosepticum (strain SCRI 1043 / ATCC BAA-672) (Erwinia carotovora subsp. atroseptica).